A 208-amino-acid chain; its full sequence is Large ribosomal subunit protein uL3 (208 aa).

The disordered stretch occupies residues 117–149 (GFQGAIKRHGQSRGPMAHGSRYHRRPGSMGPVA).

This sequence belongs to the universal ribosomal protein uL3 family. Part of the 50S ribosomal subunit. Forms a cluster with proteins L14 and L19.

Functionally, one of the primary rRNA binding proteins, it binds directly near the 3'-end of the 23S rRNA, where it nucleates assembly of the 50S subunit. The protein is Large ribosomal subunit protein uL3 of Exiguobacterium sp. (strain ATCC BAA-1283 / AT1b).